The sequence spans 247 residues: 2,3-bisphosphoglycerate-dependent phosphoglycerate mutase (247 aa).

Substrate contacts are provided by residues 8–15, 21–22, Arg60, 87–90, Lys98, 114–115, and 183–184; these read RHGESTWN, TG, ERHY, RR, and GN. Residue His9 is the Tele-phosphohistidine intermediate of the active site. Glu87 functions as the Proton donor/acceptor in the catalytic mechanism.

It belongs to the phosphoglycerate mutase family. BPG-dependent PGAM subfamily. As to quaternary structure, homodimer.

It catalyses the reaction (2R)-2-phosphoglycerate = (2R)-3-phosphoglycerate. It participates in carbohydrate degradation; glycolysis; pyruvate from D-glyceraldehyde 3-phosphate: step 3/5. Catalyzes the interconversion of 2-phosphoglycerate and 3-phosphoglycerate. The chain is 2,3-bisphosphoglycerate-dependent phosphoglycerate mutase from Leptothrix cholodnii (strain ATCC 51168 / LMG 8142 / SP-6) (Leptothrix discophora (strain SP-6)).